The chain runs to 174 residues: Bifunctional protein PyrR (174 aa).

A PRPP-binding motif is present at residues 97–109 (VVIVDDVLYTGRT).

This sequence belongs to the purine/pyrimidine phosphoribosyltransferase family. PyrR subfamily. Homodimer and homohexamer; in equilibrium.

The catalysed reaction is UMP + diphosphate = 5-phospho-alpha-D-ribose 1-diphosphate + uracil. Its function is as follows. Regulates transcriptional attenuation of the pyrimidine nucleotide (pyr) operon by binding in a uridine-dependent manner to specific sites on pyr mRNA. This disrupts an antiterminator hairpin in the RNA and favors formation of a downstream transcription terminator, leading to a reduced expression of downstream genes. Functionally, also displays a weak uracil phosphoribosyltransferase activity which is not physiologically significant. This is Bifunctional protein PyrR from Macrococcus caseolyticus (strain JCSC5402) (Macrococcoides caseolyticum).